The sequence spans 151 residues: Protein NrdI (151 aa).

It belongs to the NrdI family.

Functionally, probably involved in ribonucleotide reductase function. The protein is Protein NrdI of Mycoplasmopsis pulmonis (strain UAB CTIP) (Mycoplasma pulmonis).